Reading from the N-terminus, the 547-residue chain is Regulator of G-protein signaling 14 (547 aa).

Residues V19 to Q59 are disordered. S20, S42, S45, S143, S199, S203, and S218 each carry phosphoserine. Polar residues predominate over residues E23–E58. Residues S67–L184 form the RGS domain. Positions R191–P220 are disordered. Residue T249 is modified to Phosphothreonine. Position 289 is a phosphoserine (S289). The segment at R300 to M427 is necessary for interaction with RABGEF1. 2 consecutive RBD domains span residues K303–R374 and T376–P446. A disordered region spans residues P447–Q496. A compositionally biased stretch (low complexity) spans L476–S491. Residues I500–L522 enclose the GoLoco domain.

As to quaternary structure, interacts with GNAI1 and GNAI2. Interacts with GNAI3. Interacts with GNAO1. Interacts (via RGS and GoLoco domains) with GNAI1; the interaction occurs in the centrosomes. Interaction with GNAI1 or GNAI3 (via active GTP- or inactive GDP-bound forms) prevents association of RGS14 with centrosomes or nuclear localization. Interacts with RABGEF1; the interactions is GTP-dependent. Interacts with RAP2A; the interactions is GTP-dependent and does not alter its function on G(i) alpha subunits either as GAP or as GDI. Associates with microtubules. Found in a complex with at least BRAF, HRAS, MAP2K1, MAPK3 and RGS14. Interacts with RIC8A (via C-terminus). Interacts (via RBD 1 domain) with HRAS (active GTP-bound form preferentially). Interacts (via RBD domains) with BRAF (via N-terminus); the interaction mediates the formation of a ternary complex with RAF1. Interacts (via RBD domains) with RAF1 (via N-terminus); the interaction mediates the formation of a ternary complex with BRAF. Interacts with KRAS (active GTP-bound form preferentially), MRAS (active GTP-bound form preferentially), NRAS (active GTP-bound form preferentially) and RRAS (active GTP-bound form preferentially). In terms of processing, phosphorylated by PKC. Phosphorylation is increased in presence of forskolin and may enhance the GDI activity on G(i) alpha subunit GNAI1. In terms of tissue distribution, expressed in pyramidal neurons of the CA1, CA2 and fasciola cinerea (FC) subregions of the hippocampus and in the olfactory cortex (at protein level). Expressed in brain, spleen, heart, liver, lung, kidney, skin and thymus (at protein level). Expressed in granular layer of the cerebellum, forbrain, striatum, layer V of the cortex, olfactory cortex, tubercules, subthalamic and hippocampus, particularly in the CA2 region, to a lesser extent in the CA1 region and the external layer of the dentate gyrus. Expressed in neurons.

It is found in the nucleus. The protein resides in the PML body. It localises to the cytoplasm. The protein localises to the membrane. Its subcellular location is the cell membrane. It is found in the cytoskeleton. The protein resides in the spindle. It localises to the spindle pole. The protein localises to the microtubule organizing center. Its subcellular location is the centrosome. It is found in the cell projection. The protein resides in the dendrite. It localises to the dendritic spine. The protein localises to the postsynaptic density. Regulates G protein-coupled receptor signaling cascades. Inhibits signal transduction by increasing the GTPase activity of G protein alpha subunits, thereby driving them into their inactive GDP-bound form. Besides, modulates signal transduction via G protein alpha subunits by functioning as a GDP-dissociation inhibitor (GDI). Has GDI activity on G(i) alpha subunits GNAI1 and GNAI3, but not on GNAI2 and G(o)-alpha subunit GNAO1. Has GAP activity on GNAI0, GNAI2 and GNAI3. May act as a scaffold integrating G protein and Ras/Raf MAPkinase signaling pathways. Inhibits platelet-derived growth factor (PDGF)-stimulated ERK1/ERK2 phosphorylation; a process depending on its interaction with HRAS and that is reversed by G(i) alpha subunit GNAI1. Acts as a positive modulator of microtubule polymerisation and spindle organization through a G(i)-alpha-dependent mechanism. Plays a role in cell division; required for completion of the first mitotic division of the embryo. Involved in visual memory processing capacity; when overexpressed in the V2 secondary visual cortex area. Involved in hippocampal-based learning and memory; acts as a suppressor of synaptic plasticity in CA2 neurons. Required for the nerve growth factor (NGF)-mediated neurite outgrowth. Involved in stress resistance. In Mus musculus (Mouse), this protein is Regulator of G-protein signaling 14 (Rgs14).